The chain runs to 1804 residues: Collagen alpha-1(XI) chain (1804 aa).

The first 34 residues, 1–34 (MEPWSRWKTKRWIWDLTISTLALTFLFQAREVRG), serve as a signal peptide directing secretion. The propeptide at 35–511 (AAPVDILKAL…SKGPTISAQE (477 aa)) is N-terminal propeptide. 2 cysteine pairs are disulfide-bonded: Cys60–Cys242 and Cys181–Cys235. The Laminin G-like domain maps to 70–242 (DVAYRVTEEA…DYCDHYSPDC (173 aa)). Residues 229 to 417 (KAAYDYCDHY…DFTETSINGH (189 aa)) are nonhelical region. A compositionally biased stretch (polar residues) spans 315 to 329 (YQTETPRRVSGSNEP). 2 disordered regions span residues 315–334 (YQTE…PVEE) and 433–506 (EPGM…KGPT). The tract at residues 418–506 (GAYGEKGQKG…YGGDGSKGPT (89 aa)) is triple-helical region (interrupted). Positions 440 to 488 (GPPGPAGPAGLMGPPGLQGPSGLPGDPGDRGPPGRPGLPGADGLPGPPG) constitute a Collagen-like 1 domain. Composition is skewed to low complexity over residues 447–465 (PAGL…LPGD) and 477–494 (LPGA…LMLP). Residues 507 to 509 (ISA) form a short nonhelical segment region. The segment at 510 to 527 (QEAQAQAILQQARIALRG) is telopeptide. The interval 526–1567 (RGPPGPMGLT…SIQGDAGDNI (1042 aa)) is disordered. 2 Collagen-like domains span residues 527–584 (GPPG…GADG) and 567–623 (PPGP…GPPG). The triple-helical region stretch occupies residues 528–1540 (PPGPMGLTGR…PGPPGPPGEV (1013 aa)). Gly residues-rich tracts occupy residues 539–548 (GPVGGPGSAG) and 581–590 (GADGGRGMPG). The residue at position 610 (Lys610) is an Allysine. The span at 639 to 655 (PRGLPGEAGPRGLLGPR) shows a compositional bias: low complexity. Pro residues predominate over residues 697–708 (QGLPGPQGPIGP). Residues 715–726 (QGKPGLAGLPGA) show a composition bias toward low complexity. Residues 728–781 (GPPGHPGKEGQSGEKGALGPPGPQGPIGYPGPRGVKGADGVRGLKGSKGEKGED) enclose the Collagen-like 4 domain. The segment covering 805-814 (RGEDGPEGPK) has biased composition (basic and acidic residues). Low complexity-rich tracts occupy residues 873-901 (KPGP…PGPK), 916-925 (RGPQGPQGPV), and 969-979 (PQGPTGETGPI). A compositionally biased stretch (gly residues) spans 1040–1049 (GLKGGEGPQG). Positions 1074 to 1083 (RPGPQGPPGP) are enriched in pro residues. Residues 1084 to 1108 (AGEKGAPGEKGPQGPAGRDGVQGPV) are compositionally biased toward low complexity. The segment covering 1160–1169 (GIAGGDGEPG) has biased composition (gly residues). Residues 1216-1227 (MGPPGPPGPRGP) show a composition bias toward pro residues. Composition is skewed to low complexity over residues 1240–1249 (PGSIGSVGVV) and 1282–1296 (AGPP…IKGP). Over residues 1341–1360 (QPGPPGPSGEAGPPGPPGKR) the composition is skewed to pro residues. Low complexity-rich tracts occupy residues 1383 to 1392 (AEGPPGKTGP) and 1417 to 1426 (QGLPGAAGQD). Collagen-like domains follow at residues 1427–1482 (GPPG…SPGA) and 1481–1539 (GAKG…PPGE). A compositionally biased stretch (pro residues) spans 1428-1437 (PPGPLGPPGL). An Allysine modification is found at Lys1450. The span at 1453–1462 (PGLIGLIGPP) shows a compositional bias: low complexity. Residues 1481-1490 (GAKGDGGIPG) are compositionally biased toward gly residues. A compositionally biased stretch (pro residues) spans 1491–1507 (PAGPIGPPGPPGLPGPA). Positions 1509–1519 (PKGNKGSSGPT) are enriched in low complexity. Positions 1528–1537 (PGPPGPPGPP) are enriched in pro residues. The tract at residues 1541–1561 (IQPLPILSPKKTRRHTESIQG) is nonhelical region (C-terminal). Residues 1562 to 1804 (DAGDNILDYS…FEVGPACFLG (243 aa)) constitute a propeptide, C-terminal propeptide. The Fibrillar collagen NC1 domain occupies 1575-1803 (EEIFGSLNSL…GFEVGPACFL (229 aa)). Cys1605 and Cys1637 form a disulfide bridge. Ca(2+) contacts are provided by Asp1623, Asn1625, Gln1626, Cys1628, and Asp1631. Asn1638 carries N-linked (GlcNAc...) asparagine glycosylation. 2 cysteine pairs are disulfide-bonded: Cys1646–Cys1801 and Cys1712–Cys1755.

Belongs to the fibrillar collagen family. Trimers composed of three different chains: alpha 1(XI), alpha 2(XI), and alpha 3(XI). Alpha 3(XI) is a post-translational modification of alpha 1(II). Alpha 1(V) can also be found instead of alpha 3(XI)=1(II). Post-translationally, prolines at the third position of the tripeptide repeating unit (G-X-Y) are hydroxylated in some or all of the chains. In terms of processing, N-glycosylated.

The protein localises to the secreted. Its subcellular location is the extracellular space. It is found in the extracellular matrix. In terms of biological role, may play an important role in fibrillogenesis by controlling lateral growth of collagen II fibrils. In Mus musculus (Mouse), this protein is Collagen alpha-1(XI) chain (Col11a1).